We begin with the raw amino-acid sequence, 231 residues long: NADH-ubiquinone oxidoreductase chain 4 (231 aa).

Transmembrane regions (helical) follow at residues 1–21 (PIAGSMILAAILLKLGGYGII), 34–54 (VFLPFIVLALWGAILANLTCL), 63–85 (IAYSSISHMGLVVAAIIIQTPWG), 89–111 (AMALMIAHGFTSSALFCLANTTY), 128–148 (MMPMATTWWLMANLMNIAIPP), 169–189 (TIIMLGLSMLITASYSLHMFL), and 211–231 (LLMTLHLIPLLMISFKPELVT).

It belongs to the complex I subunit 4 family.

The protein resides in the mitochondrion membrane. The enzyme catalyses a ubiquinone + NADH + 5 H(+)(in) = a ubiquinol + NAD(+) + 4 H(+)(out). Its function is as follows. Core subunit of the mitochondrial membrane respiratory chain NADH dehydrogenase (Complex I) that is believed to belong to the minimal assembly required for catalysis. Complex I functions in the transfer of electrons from NADH to the respiratory chain. The immediate electron acceptor for the enzyme is believed to be ubiquinone. In Sistrurus miliarius (Pigmy rattlesnake), this protein is NADH-ubiquinone oxidoreductase chain 4 (MT-ND4).